A 446-amino-acid chain; its full sequence is 3',5'-cyclic-AMP phosphodiesterase 7B (446 aa).

The PDEase domain maps to 97 to 420 (LDEDYLGQAR…AQWKSLLSNQ (324 aa)). Catalysis depends on histidine 173, which acts as the Proton donor. A divalent metal cation contacts are provided by histidine 177, histidine 213, aspartate 214, and aspartate 323. Residues 422–446 (RRRGSGQDLAGPAPETLEQTEGATP) form a disordered region. Phosphoserine is present on serine 426. Phosphothreonine is present on threonine 445.

The protein belongs to the cyclic nucleotide phosphodiesterase family. PDE7 subfamily. The cofactor is a divalent metal cation. Highly expressed in brain.

The catalysed reaction is 3',5'-cyclic AMP + H2O = AMP + H(+). It functions in the pathway purine metabolism; 3',5'-cyclic AMP degradation; AMP from 3',5'-cyclic AMP: step 1/1. Its activity is regulated as follows. Inhibited by dipyridamole, IBMX and SCH 51866. Insensitive to zaprinast, rolipram, and milrinone. Hydrolyzes the second messenger cAMP, which is a key regulator of many important physiological processes. May be involved in the control of cAMP-mediated neural activity and cAMP metabolism in the brain. This chain is 3',5'-cyclic-AMP phosphodiesterase 7B, found in Mus musculus (Mouse).